The sequence spans 257 residues: Zinc import ATP-binding protein ZnuC (257 aa).

In terms of domain architecture, ABC transporter spans 6–221 (VRLEQITVAF…AFVETFGHQV (216 aa)). 38–45 (GPNGAGKT) contacts ATP.

Belongs to the ABC transporter superfamily. Zinc importer (TC 3.A.1.15.5) family. The complex is composed of two ATP-binding proteins (ZnuC), two transmembrane proteins (ZnuB) and a solute-binding protein (ZnuA).

It localises to the cell inner membrane. The enzyme catalyses Zn(2+)(out) + ATP(in) + H2O(in) = Zn(2+)(in) + ADP(in) + phosphate(in) + H(+)(in). Functionally, part of the ABC transporter complex ZnuABC involved in zinc import. Responsible for energy coupling to the transport system. The chain is Zinc import ATP-binding protein ZnuC from Marinobacter nauticus (strain ATCC 700491 / DSM 11845 / VT8) (Marinobacter aquaeolei).